We begin with the raw amino-acid sequence, 74 residues long: Kappa-stichotoxin-Shd5a (74 aa).

The N-terminal stretch at 1 to 22 (MKFQVIAAVLLIAFCLCVVVTA) is a signal peptide. A propeptide spanning residues 23–39 (RMELQDVEDVENGFQKR) is cleaved from the precursor. The ShKT domain occupies 42 to 74 (CIDTIPQSRCTAFQCKHSMKYRLSFCRKTCGTC). 3 disulfide bridges follow: Cys-42/Cys-74, Cys-51/Cys-67, and Cys-56/Cys-71.

This sequence belongs to the sea anemone type 1 potassium channel toxin family. Type 1a subfamily.

It localises to the secreted. The protein resides in the nematocyst. Inhibits voltage-gated potassium channels (Kv) with higher potency for Kv1.1/KCNA1 and Kv1.3/KCNA3. This chain is Kappa-stichotoxin-Shd5a, found in Stichodactyla haddoni (Saddle carpet anemone).